An 884-amino-acid chain; its full sequence is DNA replication licensing factor mcm2 (884 aa).

Positions 1-16 (MADSSESFNIATSPRT) are enriched in polar residues. Disordered stretches follow at residues 1 to 61 (MADS…IGDA) and 120 to 151 (LYDSDEEDEDRPARKRRMAERAAEGAPEEDEE). Positions 47 to 58 (PREEEEDGEELI) are enriched in acidic residues. The segment at 314-340 (CNKCNFILGPFFQSQNQEVKPGSCPEC) adopts a C4-type zinc-finger fold. Residues 458 to 664 (IGERIFASIA…VQDEMLARFV (207 aa)) enclose the MCM domain. The ADP site is built by S515 and Q516. The Arginine finger signature appears at 640–643 (SRFD).

Belongs to the MCM family. Component of the mcm2-7 complex (RLF-M). The complex forms a toroidal hexameric ring with the proposed subunit order mcm2-mcm6-mcm4-mcm7-mcm3-mcm5. Component of the replisome complex. Component of the CMG helicase complex, composed of the mcm2-7 complex, the GINS complex and cdc45. Post-translationally, may be in a phosphorylated state in the mitotic mcm complex. Phosphorylated in the interphase mcm complex. Phosphorylated by the cdc7-dbf4 and cdc7-dbf4b complexes.

The protein resides in the nucleus. It is found in the chromosome. It carries out the reaction ATP + H2O = ADP + phosphate + H(+). In terms of biological role, acts as a component of the MCM2-7 complex (MCM complex) which is the replicative helicase essential for 'once per cell cycle' DNA replication initiation and elongation in eukaryotic cells. Core component of CDC45-MCM-GINS (CMG) helicase, the molecular machine that unwinds template DNA during replication, and around which the replisome is built. The active ATPase sites in the MCM2-7 ring are formed through the interaction surfaces of two neighboring subunits such that a critical structure of a conserved arginine finger motif is provided in trans relative to the ATP-binding site of the Walker A box of the adjacent subunit. The six ATPase active sites, however, are likely to contribute differentially to the complex helicase activity. Required for the entry in S phase and for cell division. This Xenopus tropicalis (Western clawed frog) protein is DNA replication licensing factor mcm2.